Reading from the N-terminus, the 224-residue chain is Thiamine-phosphate synthase (224 aa).

Residues Q44 to K48 and N79 contribute to the 4-amino-2-methyl-5-(diphosphooxymethyl)pyrimidine site. Mg(2+) is bound by residues D80 and D99. S117 contributes to the 4-amino-2-methyl-5-(diphosphooxymethyl)pyrimidine binding site. Residue T143–T145 coordinates 2-[(2R,5Z)-2-carboxy-4-methylthiazol-5(2H)-ylidene]ethyl phosphate. A 4-amino-2-methyl-5-(diphosphooxymethyl)pyrimidine-binding site is contributed by K146. 2-[(2R,5Z)-2-carboxy-4-methylthiazol-5(2H)-ylidene]ethyl phosphate is bound by residues G175 and I195–S196.

The protein belongs to the thiamine-phosphate synthase family. Requires Mg(2+) as cofactor.

It catalyses the reaction 2-[(2R,5Z)-2-carboxy-4-methylthiazol-5(2H)-ylidene]ethyl phosphate + 4-amino-2-methyl-5-(diphosphooxymethyl)pyrimidine + 2 H(+) = thiamine phosphate + CO2 + diphosphate. It carries out the reaction 2-(2-carboxy-4-methylthiazol-5-yl)ethyl phosphate + 4-amino-2-methyl-5-(diphosphooxymethyl)pyrimidine + 2 H(+) = thiamine phosphate + CO2 + diphosphate. The enzyme catalyses 4-methyl-5-(2-phosphooxyethyl)-thiazole + 4-amino-2-methyl-5-(diphosphooxymethyl)pyrimidine + H(+) = thiamine phosphate + diphosphate. It functions in the pathway cofactor biosynthesis; thiamine diphosphate biosynthesis; thiamine phosphate from 4-amino-2-methyl-5-diphosphomethylpyrimidine and 4-methyl-5-(2-phosphoethyl)-thiazole: step 1/1. In terms of biological role, condenses 4-methyl-5-(beta-hydroxyethyl)thiazole monophosphate (THZ-P) and 2-methyl-4-amino-5-hydroxymethyl pyrimidine pyrophosphate (HMP-PP) to form thiamine monophosphate (TMP). This Bacillus velezensis (strain DSM 23117 / BGSC 10A6 / LMG 26770 / FZB42) (Bacillus amyloliquefaciens subsp. plantarum) protein is Thiamine-phosphate synthase.